Consider the following 379-residue polypeptide: Carbamoyl phosphate synthase small chain (379 aa).

Residues 1–188 (MSTPAILALA…ELGKGFTQPE (188 aa)) form a CPSase region. 3 residues coordinate L-glutamine: S47, G240, and G242. One can recognise a Glutamine amidotransferase type-1 domain in the interval 192 to 379 (HVVAYDYGVK…FIELIEAAKK (188 aa)). C269 (nucleophile) is an active-site residue. Residues L270, Q273, N311, G313, and F314 each contribute to the L-glutamine site. Residues H353 and E355 contribute to the active site.

The protein belongs to the CarA family. In terms of assembly, composed of two chains; the small (or glutamine) chain promotes the hydrolysis of glutamine to ammonia, which is used by the large (or ammonia) chain to synthesize carbamoyl phosphate. Tetramer of heterodimers (alpha,beta)4.

It carries out the reaction hydrogencarbonate + L-glutamine + 2 ATP + H2O = carbamoyl phosphate + L-glutamate + 2 ADP + phosphate + 2 H(+). The enzyme catalyses L-glutamine + H2O = L-glutamate + NH4(+). Its pathway is amino-acid biosynthesis; L-arginine biosynthesis; carbamoyl phosphate from bicarbonate: step 1/1. It participates in pyrimidine metabolism; UMP biosynthesis via de novo pathway; (S)-dihydroorotate from bicarbonate: step 1/3. Functionally, small subunit of the glutamine-dependent carbamoyl phosphate synthetase (CPSase). CPSase catalyzes the formation of carbamoyl phosphate from the ammonia moiety of glutamine, carbonate, and phosphate donated by ATP, constituting the first step of 2 biosynthetic pathways, one leading to arginine and/or urea and the other to pyrimidine nucleotides. The small subunit (glutamine amidotransferase) binds and cleaves glutamine to supply the large subunit with the substrate ammonia. This chain is Carbamoyl phosphate synthase small chain, found in Acinetobacter baylyi (strain ATCC 33305 / BD413 / ADP1).